The following is a 333-amino-acid chain: Casein kinase II subunit alpha-2 (333 aa).

A Protein kinase domain is found at 34 to 319 (YEVVRKVGRG…AREAMAHPYF (286 aa)). Residues 40–48 (VGRGKYSEV) and K63 contribute to the ATP site. D151 functions as the Proton acceptor in the catalytic mechanism.

The protein belongs to the protein kinase superfamily. Ser/Thr protein kinase family. CK2 subfamily. In terms of assembly, monomer. Post-translationally, autophosphorylated.

The protein localises to the cytoplasm. It catalyses the reaction L-seryl-[protein] + ATP = O-phospho-L-seryl-[protein] + ADP + H(+). The catalysed reaction is L-threonyl-[protein] + ATP = O-phospho-L-threonyl-[protein] + ADP + H(+). In terms of biological role, casein kinases are operationally defined by their preferential utilization of acidic proteins such as caseins as substrates. It can phosphorylate a large number of proteins. Involved in photoperiod sensitivity (PS). Increases days-to-heading under natural day (ND) and long day (LD) conditions, but not under short day (SD) conditions. The polypeptide is Casein kinase II subunit alpha-2 (Oryza sativa subsp. indica (Rice)).